The sequence spans 114 residues: Large ribosomal subunit protein bL19 (114 aa).

The protein belongs to the bacterial ribosomal protein bL19 family.

This protein is located at the 30S-50S ribosomal subunit interface and may play a role in the structure and function of the aminoacyl-tRNA binding site. The polypeptide is Large ribosomal subunit protein bL19 (Thermobifida fusca (strain YX)).